A 335-amino-acid polypeptide reads, in one-letter code: Beta-ketoacyl-[acyl-carrier-protein] synthase III (335 aa).

Active-site residues include Cys118 and His259. The interval 260-264 (QANER) is ACP-binding. The active site involves Asn289.

This sequence belongs to the thiolase-like superfamily. FabH family. In terms of assembly, homodimer.

It is found in the cytoplasm. It carries out the reaction malonyl-[ACP] + acetyl-CoA + H(+) = 3-oxobutanoyl-[ACP] + CO2 + CoA. The protein operates within lipid metabolism; fatty acid biosynthesis. Functionally, catalyzes the condensation reaction of fatty acid synthesis by the addition to an acyl acceptor of two carbons from malonyl-ACP. Catalyzes the first condensation reaction which initiates fatty acid synthesis and may therefore play a role in governing the total rate of fatty acid production. Possesses both acetoacetyl-ACP synthase and acetyl transacylase activities. Its substrate specificity determines the biosynthesis of branched-chain and/or straight-chain of fatty acids. This is Beta-ketoacyl-[acyl-carrier-protein] synthase III from Chlamydia caviae (strain ATCC VR-813 / DSM 19441 / 03DC25 / GPIC) (Chlamydophila caviae).